The chain runs to 476 residues: Bifunctional protein HldE (476 aa).

The ribokinase stretch occupies residues 1-319 (MKVSLPAFEK…EALALHHGES (319 aa)). Position 195–198 (195–198 (NMSE)) interacts with ATP. D264 is an active-site residue. Positions 345-476 (MTNGCFDILH…AIIQNIMAKQ (132 aa)) are cytidylyltransferase.

This sequence in the N-terminal section; belongs to the carbohydrate kinase PfkB family. In the C-terminal section; belongs to the cytidylyltransferase family. As to quaternary structure, homodimer.

It catalyses the reaction D-glycero-beta-D-manno-heptose 7-phosphate + ATP = D-glycero-beta-D-manno-heptose 1,7-bisphosphate + ADP + H(+). The catalysed reaction is D-glycero-beta-D-manno-heptose 1-phosphate + ATP + H(+) = ADP-D-glycero-beta-D-manno-heptose + diphosphate. Its pathway is nucleotide-sugar biosynthesis; ADP-L-glycero-beta-D-manno-heptose biosynthesis; ADP-L-glycero-beta-D-manno-heptose from D-glycero-beta-D-manno-heptose 7-phosphate: step 1/4. It participates in nucleotide-sugar biosynthesis; ADP-L-glycero-beta-D-manno-heptose biosynthesis; ADP-L-glycero-beta-D-manno-heptose from D-glycero-beta-D-manno-heptose 7-phosphate: step 3/4. Its function is as follows. Catalyzes the phosphorylation of D-glycero-D-manno-heptose 7-phosphate at the C-1 position to selectively form D-glycero-beta-D-manno-heptose-1,7-bisphosphate. In terms of biological role, catalyzes the ADP transfer from ATP to D-glycero-beta-D-manno-heptose 1-phosphate, yielding ADP-D-glycero-beta-D-manno-heptose. The chain is Bifunctional protein HldE from Shewanella sp. (strain ANA-3).